We begin with the raw amino-acid sequence, 339 residues long: Ribosomal RNA large subunit methyltransferase F (339 aa).

The disordered stretch occupies residues 1–26 (MTAPSTPKPQRKKPKTATTAKPVVPR).

Belongs to the methyltransferase superfamily. METTL16/RlmF family.

The protein localises to the cytoplasm. It carries out the reaction adenosine(1618) in 23S rRNA + S-adenosyl-L-methionine = N(6)-methyladenosine(1618) in 23S rRNA + S-adenosyl-L-homocysteine + H(+). Specifically methylates the adenine in position 1618 of 23S rRNA. The chain is Ribosomal RNA large subunit methyltransferase F from Pseudomonas fluorescens (strain SBW25).